Reading from the N-terminus, the 660-residue chain is ATP-dependent zinc metalloprotease FtsH (660 aa).

Residues 1-20 are disordered; it reads MMPSSQRPSPRGSRQSPSPD. Topologically, residues 1–24 are cytoplasmic; that stretch reads MMPSSQRPSPRGSRQSPSPDQRGR. Residues 25-45 form a helical membrane-spanning segment; sequence IAFAILATLVVAVLLLTLFSH. Over 46–118 the chain is Extracellular; the sequence is APSGQPLGYS…VQVSYITPGP (73 aa). A helical membrane pass occupies residues 119–139; that stretch reads GIASTIIEYVIFFGIFIGIWV. Over 140–660 the chain is Cytoplasmic; sequence YLTRRTQGSV…ASHDDTDPVS (521 aa). ATP is bound at residue 213-220; that stretch reads GPPGTGKT. Residue His435 coordinates Zn(2+). Glu436 is a catalytic residue. The Zn(2+) site is built by His439 and Asp511.

It in the central section; belongs to the AAA ATPase family. In the C-terminal section; belongs to the peptidase M41 family. As to quaternary structure, homohexamer. Zn(2+) serves as cofactor.

It is found in the cell membrane. Functionally, acts as a processive, ATP-dependent zinc metallopeptidase for both cytoplasmic and membrane proteins. Plays a role in the quality control of integral membrane proteins. The chain is ATP-dependent zinc metalloprotease FtsH from Acidimicrobium ferrooxidans (strain DSM 10331 / JCM 15462 / NBRC 103882 / ICP).